Here is a 329-residue protein sequence, read N- to C-terminus: Protein PRY2 (329 aa).

The signal sequence occupies residues 1–18; it reads MKFSKVSLLAASASVALS. Over residues 122–131 the composition is skewed to polar residues; the sequence is TSASATQDDV. Residues 122–197 are disordered; it reads TSASATQDDV…SSSDFSTSMV (76 aa). Over residues 132–190 the composition is skewed to low complexity; that stretch reads TTTLTSSTQPTSTTTPTTTTTSPTTTTSPTTTASPTTTASPTTATTTQSTASSTQSSSS. One can recognise an SCP domain in the interval 197–311; that stretch reads VNEHNTKRAL…EWGDYIICSY (115 aa).

Belongs to the CRISP family. O-glycosylated.

Its subcellular location is the secreted. Its function is as follows. Secreted protein required for efficient export of lipids such as acetylated sterols. Acts in detoxification of hydrophobic compounds. The sequence is that of Protein PRY2 (PRY2) from Saccharomyces cerevisiae (strain ATCC 204508 / S288c) (Baker's yeast).